A 209-amino-acid chain; its full sequence is Large ribosomal subunit protein uL4 (209 aa).

Residues 45-78 are disordered; it reads RQGTHKAKERAEVAGSTRKIKKQKGTGTARAGSA.

This sequence belongs to the universal ribosomal protein uL4 family. In terms of assembly, part of the 50S ribosomal subunit.

One of the primary rRNA binding proteins, this protein initially binds near the 5'-end of the 23S rRNA. It is important during the early stages of 50S assembly. It makes multiple contacts with different domains of the 23S rRNA in the assembled 50S subunit and ribosome. Functionally, forms part of the polypeptide exit tunnel. The protein is Large ribosomal subunit protein uL4 of Flavobacterium psychrophilum (strain ATCC 49511 / DSM 21280 / CIP 103535 / JIP02/86).